A 112-amino-acid chain; its full sequence is UPF0060 membrane protein Arth_4238 (112 aa).

The next 4 helical transmembrane spans lie at 7-27 (ILLF…VWQA), 33-53 (EWWW…AATL), 62-82 (ILAA…MVFD), and 88-108 (RWDI…MFAP).

This sequence belongs to the UPF0060 family.

The protein localises to the cell membrane. This is UPF0060 membrane protein Arth_4238 from Arthrobacter sp. (strain FB24).